The following is a 90-amino-acid chain: Probable Fe(2+)-trafficking protein (90 aa).

Belongs to the Fe(2+)-trafficking protein family.

In terms of biological role, could be a mediator in iron transactions between iron acquisition and iron-requiring processes, such as synthesis and/or repair of Fe-S clusters in biosynthetic enzymes. The sequence is that of Probable Fe(2+)-trafficking protein from Bordetella avium (strain 197N).